The primary structure comprises 483 residues: ATP synthase subunit beta (483 aa).

An ATP-binding site is contributed by 168-175; it reads GGAGVGKT.

This sequence belongs to the ATPase alpha/beta chains family. As to quaternary structure, F-type ATPases have 2 components, CF(1) - the catalytic core - and CF(0) - the membrane proton channel. CF(1) has five subunits: alpha(3), beta(3), gamma(1), delta(1), epsilon(1). CF(0) has three main subunits: a(1), b(2) and c(9-12). The alpha and beta chains form an alternating ring which encloses part of the gamma chain. CF(1) is attached to CF(0) by a central stalk formed by the gamma and epsilon chains, while a peripheral stalk is formed by the delta and b chains.

It localises to the cell membrane. It catalyses the reaction ATP + H2O + 4 H(+)(in) = ADP + phosphate + 5 H(+)(out). Its function is as follows. Produces ATP from ADP in the presence of a proton gradient across the membrane. The catalytic sites are hosted primarily by the beta subunits. This Mycobacterium ulcerans (strain Agy99) protein is ATP synthase subunit beta.